The following is a 227-amino-acid chain: 2,3-bisphosphoglycerate-dependent phosphoglycerate mutase (227 aa).

Substrate contacts are provided by residues 7-14, 20-21, arginine 59, 86-89, lysine 97, 113-114, and 182-183; these read RHGQSEWN, TG, ERHY, RR, and GN. Histidine 8 acts as the Tele-phosphohistidine intermediate in catalysis. Glutamate 86 acts as the Proton donor/acceptor in catalysis.

Belongs to the phosphoglycerate mutase family. BPG-dependent PGAM subfamily. As to quaternary structure, homodimer.

It catalyses the reaction (2R)-2-phosphoglycerate = (2R)-3-phosphoglycerate. It functions in the pathway carbohydrate degradation; glycolysis; pyruvate from D-glyceraldehyde 3-phosphate: step 3/5. Its function is as follows. Catalyzes the interconversion of 2-phosphoglycerate and 3-phosphoglycerate. The sequence is that of 2,3-bisphosphoglycerate-dependent phosphoglycerate mutase from Neisseria meningitidis serogroup C (strain 053442).